Here is a 564-residue protein sequence, read N- to C-terminus: Keratin, type II cytoskeletal 6B (564 aa).

Over residues 1–11 (MASTSTTIRSH) the composition is skewed to low complexity. The segment at 1–23 (MASTSTTIRSHSSSRRGFSANSA) is disordered. A2 is modified (N-acetylalanine). Positions 2 to 162 (ASTSTTIRSH…DPAIQRVRAE (161 aa)) are head. The tract at residues 163–198 (EREQIKTLNNKFASFIDKVRFLEQQNKVLDTKWTLL) is coil 1A. Residues 163-476 (EREQIKTLNN…KLLEGEECRL (314 aa)) form the IF rod domain. The linker 1 stretch occupies residues 199–217 (QEQGTKTVRQNLEPLFEQY). A coil 1B region spans residues 218–309 (INNLRRQLDN…ALYDAELSQM (92 aa)). The interval 310–333 (QTHISDTSVVLSMDNNRNLDLDSI) is linker 12. Residues 334–472 (IAEVKAQYEE…ATYRKLLEGE (139 aa)) form a coil 2 region. The segment at 473 to 564 (ECRLNGEGVG…SSSSRKSYKH (92 aa)) is tail. The segment at 533-564 (RATGGGLSSVGGGSSTIKYTTTSSSSRKSYKH) is disordered. Gly residues predominate over residues 534-546 (ATGGGLSSVGGGS). Low complexity predominate over residues 547-564 (STIKYTTTSSSSRKSYKH).

This sequence belongs to the intermediate filament family. In terms of assembly, heterodimer of a type I and a type II keratin. KRT6 isomers associate with KRT16 and/or KRT17. In terms of tissue distribution, constitutively expressed in distinct types of epithelia such as those in oral mucosa, esophagus, papillae of tongue and hair follicle outer root sheath.

The chain is Keratin, type II cytoskeletal 6B (KRT6B) from Homo sapiens (Human).